The following is a 647-amino-acid chain: Serine/threonine-protein kinase PLK3 (647 aa).

The disordered stretch occupies residues 1–56 (MEPAAGFLSPRPFPRAAAPSSPPAGPGPPASASPRSEPGVLAGPQTPDASRLITDP). Positions 20–31 (SSPPAGPGPPAS) are enriched in pro residues. Residues 62-314 (YIKGRLLGKG…IEQILRHDFF (253 aa)) form the Protein kinase domain. ATP is bound by residues 68–76 (LGKGGFARC) and Lys-91. The active-site Proton acceptor is Asp-185. 2 POLO box domains span residues 464 to 542 (WVSK…YMEQ) and 563 to 646 (LLLQ…DRSP).

Belongs to the protein kinase superfamily. Ser/Thr protein kinase family. CDC5/Polo subfamily. As to quaternary structure, interacts with GOLGB1. Interacts (via the POLO-box domain) with CIB1; leading to inhibit PLK3 kinase activity. Post-translationally, phosphorylated in an ATM-dependent manner following DNA damage. Phosphorylated as cells enter mitosis and dephosphorylated as cells exit mitosis. As to expression, constitutively expressed in post-mitotic neurons.

The protein localises to the cell projection. The protein resides in the dendrite. Its subcellular location is the cytoplasm. It localises to the nucleus. It is found in the nucleolus. The protein localises to the golgi apparatus. The protein resides in the cytoskeleton. Its subcellular location is the microtubule organizing center. It localises to the centrosome. It carries out the reaction L-seryl-[protein] + ATP = O-phospho-L-seryl-[protein] + ADP + H(+). It catalyses the reaction L-threonyl-[protein] + ATP = O-phospho-L-threonyl-[protein] + ADP + H(+). Its function is as follows. Serine/threonine-protein kinase involved in cell cycle regulation, response to stress and Golgi disassembly. Polo-like kinases act by binding and phosphorylating proteins that are already phosphorylated on a specific motif recognized by the POLO box domains. Phosphorylates ATF2, BCL2L1, CDC25A, CDC25C, CHEK2, HIF1A, JUN, p53/TP53, p73/TP73, PTEN, TOP2A and VRK1. Involved in cell cycle regulation: required for entry into S phase and cytokinesis. Phosphorylates BCL2L1, leading to regulate the G2 checkpoint and progression to cytokinesis during mitosis. Plays a key role in response to stress: rapidly activated upon stress stimulation, such as ionizing radiation, reactive oxygen species (ROS), hyperosmotic stress, UV irradiation and hypoxia. Involved in DNA damage response and G1/S transition checkpoint by phosphorylating CDC25A, p53/TP53 and p73/TP73. Phosphorylates p53/TP53 in response to reactive oxygen species (ROS), thereby promoting p53/TP53-mediated apoptosis. Phosphorylates CHEK2 in response to DNA damage, promoting the G2/M transition checkpoint. Phosphorylates the transcription factor p73/TP73 in response to DNA damage, leading to inhibit p73/TP73-mediated transcriptional activation and pro-apoptotic functions. Phosphorylates HIF1A and JUN is response to hypoxia. Phosphorylates ATF2 following hyperosmotic stress in corneal epithelium. Also involved in Golgi disassembly during the cell cycle: part of a MEK1/MAP2K1-dependent pathway that induces Golgi fragmentation during mitosis by mediating phosphorylation of VRK1. May participate in endomitotic cell cycle, a form of mitosis in which both karyokinesis and cytokinesis are interrupted and is a hallmark of megakaryocyte differentiation, via its interaction with CIB1. The polypeptide is Serine/threonine-protein kinase PLK3 (Plk3) (Rattus norvegicus (Rat)).